Consider the following 473-residue polypeptide: TKASVGFKAGVKDYKLTYYTPDYETKDTDILAAFRVTPQPGVPPEEAGAAVAAESSTGTWTTVWTDGLTSLDRYKGRCYHIEPVVGEENQYIAYVAYPLDLFEEGSVTNMFTSIVGNVFGFKALRALRLEDLRIPPAYSKTFEGPPHGIQSERDKLNKYGRPLLGCTIKPKLGLSAKNYGRACYECLRGGLDFTKDDENVNSQPFMRWRDRFLFCAEALYKAQAETGEIKGHYLNATAGTCEEMIKRAVFARELGVPIVMHDYLTGGFTANTSLAHYCRDNGLLLHIHRAMHAVIDRQKYHGMHFRVLAKALRMSGGDHIHAGTVVGKLEGEREMTLGFVDLLRDDYIEKDRSRGIFFTQDWVSMPGVIPVASGGIHVWHMPALTEIFGDDSVLQFGGGTLGHPWGNAPGAVANRVALEACVQARNEGRDLAREGNEIIREASKWSPELAAACEIWKAIKFEFEPVDKLDIKK.

Lysine 8 carries the N6,N6,N6-trimethyllysine modification. The substrate site is built by asparagine 117 and threonine 167. Lysine 169 acts as the Proton acceptor in catalysis. A substrate-binding site is contributed by lysine 171. Residues lysine 195, aspartate 197, and glutamate 198 each contribute to the Mg(2+) site. N6-carboxylysine is present on lysine 195. The Proton acceptor role is filled by histidine 288. Substrate is bound by residues arginine 289, histidine 321, and serine 373.

Belongs to the RuBisCO large chain family. Type I subfamily. Heterohexadecamer of 8 large chains and 8 small chains; disulfide-linked. The disulfide link is formed within the large subunit homodimers. It depends on Mg(2+) as a cofactor. In terms of processing, the disulfide bond which can form in the large chain dimeric partners within the hexadecamer appears to be associated with oxidative stress and protein turnover.

It localises to the plastid. It is found in the chloroplast. It catalyses the reaction 2 (2R)-3-phosphoglycerate + 2 H(+) = D-ribulose 1,5-bisphosphate + CO2 + H2O. It carries out the reaction D-ribulose 1,5-bisphosphate + O2 = 2-phosphoglycolate + (2R)-3-phosphoglycerate + 2 H(+). RuBisCO catalyzes two reactions: the carboxylation of D-ribulose 1,5-bisphosphate, the primary event in carbon dioxide fixation, as well as the oxidative fragmentation of the pentose substrate in the photorespiration process. Both reactions occur simultaneously and in competition at the same active site. This chain is Ribulose bisphosphate carboxylase large chain, found in Amorphophallus titanum (Titan arum).